The primary structure comprises 125 residues: Large ribosomal subunit protein bL19 (125 aa).

This sequence belongs to the bacterial ribosomal protein bL19 family.

In terms of biological role, this protein is located at the 30S-50S ribosomal subunit interface and may play a role in the structure and function of the aminoacyl-tRNA binding site. This chain is Large ribosomal subunit protein bL19, found in Wolbachia sp. subsp. Brugia malayi (strain TRS).